We begin with the raw amino-acid sequence, 1458 residues long: ABC multidrug transporter B (1458 aa).

5 helical membrane-spanning segments follow: residues 30 to 50 (FSLLFEELILGILPLGIVLII), 70 to 90 (LLWAKITAWLALGIVQLVLAV), 102 to 122 (ASIAANAIITVGFFILCLLSC), 128 to 148 (STTPSFLLNIYLLFTLLFDIA), and 165 to 185 (IAILTSVTVGIKFLLLILEAV). Residue Asn208 is glycosylated (N-linked (GlcNAc...) asparagine). Residues 273–295 (WPLLSAVPPRACLAALNFCQPLL) traverse the membrane as a helical segment. Positions 283–561 (ACLAALNFCQ…LVMALMTFVG (279 aa)) constitute an ABC transmembrane type-1 1 domain. Asn309 carries an N-linked (GlcNAc...) asparagine glycan. Transmembrane regions (helical) follow at residues 314–334 (IGYGLIGAYILVYIGMGVTMG), 387–407 (WQTIHDIWGNAAEIALAIYLL), 411–431 (LGVACVVPVGVALVALIGCLI), 501–521 (LGWTTRIFAPIFALGAFYGIM), and 541–561 (LFALLADPLLSLVMALMTFVG). The 228-residue stretch at 626 to 853 (LTVKNATFAW…AGGYVSSFGL (228 aa)) folds into the ABC transporter 1 domain. Asn630 carries an N-linked (GlcNAc...) asparagine glycan. 660–667 (GPSGCGKS) is an ATP binding site. N-linked (GlcNAc...) asparagine glycosylation is found at Asn702, Asn804, and Asn879. Residues 933–1182 (PNGRTGYYLG…LVTFWTNLET (250 aa)) form the ABC transmembrane type-1 2 domain. The next 6 helical transmembrane spans lie at 940–960 (YLGIYAMLGAVGMLSLIIGCW), 978–998 (LLATVLNAPMSFFAATDSGSI), 1016–1036 (AAINTFATLILCLAQMILMGI), 1040–1060 (YAAISFPLVILAVYSIQKVYL), 1125–1145 (LTLTLDMVVAAIAVILIVLVV), and 1156–1176 (VGVALLNVILFSQSIKLLVTF). An ABC transporter 2 domain is found at 1219–1449 (IEFKSVSAEY…EGSYFSRLYA (231 aa)). 1252–1259 (GRTGSGKT) is a binding site for ATP. Asn1316 carries an N-linked (GlcNAc...) asparagine glycan.

Belongs to the ABC transporter superfamily. ABCC family. Conjugate transporter (TC 3.A.1.208) subfamily.

It localises to the cell membrane. Functionally, pleiotropic ABC efflux transporter that may be involved in A.fumigatus adaptation to azoles such as vorizonazole. The protein is ABC multidrug transporter B of Aspergillus fumigatus (strain ATCC MYA-4609 / CBS 101355 / FGSC A1100 / Af293) (Neosartorya fumigata).